The following is a 177-amino-acid chain: Isopentenyl-diphosphate Delta-isomerase (177 aa).

Positions 22 and 28 each coordinate Mn(2+). A Nudix hydrolase domain is found at 26-160; sequence LRHMAISVFV…PERFTPWLRI (135 aa). The active site involves cysteine 62. Residue histidine 64 coordinates Mn(2+). Glutamate 82 serves as a coordination point for Mg(2+). Residues glutamate 108 and glutamate 110 each coordinate Mn(2+). Glutamate 110 is a catalytic residue.

It belongs to the IPP isomerase type 1 family. The cofactor is Mg(2+). Requires Mn(2+) as cofactor.

The protein localises to the cytoplasm. The catalysed reaction is isopentenyl diphosphate = dimethylallyl diphosphate. Its pathway is isoprenoid biosynthesis; dimethylallyl diphosphate biosynthesis; dimethylallyl diphosphate from isopentenyl diphosphate: step 1/1. It participates in porphyrin-containing compound metabolism; chlorophyll biosynthesis. In terms of biological role, catalyzes the 1,3-allylic rearrangement of the homoallylic substrate isopentenyl (IPP) to its highly electrophilic allylic isomer, dimethylallyl diphosphate (DMAPP). The polypeptide is Isopentenyl-diphosphate Delta-isomerase (Cereibacter sphaeroides (strain ATCC 17029 / ATH 2.4.9) (Rhodobacter sphaeroides)).